A 124-amino-acid chain; its full sequence is MaFF-interacting protein (124 aa).

A coiled-coil region spans residues 54 to 96; the sequence is LVSEVEELYKSITALREKLLQAEQSLRNLKDIHMSLEKDVTAM.

The protein belongs to the tektin family. As to quaternary structure, interacts with MIS18A. Interacts (via its coiled-coil region) with MAFF. In terms of tissue distribution, strongly expressed in brain, kidney and ovary. Moderately expressed in liver, spleen, thymus, prostate, testis, small intestine and colon. Weakly expressed in heart, placenta, lung and leukocytes.

It localises to the cytoplasm. The protein localises to the nucleus. The protein resides in the nucleolus. Acts as a coactivator of MAFF transcriptional activity. Inhibits cell growth and colony-forming efficiency. The protein is MaFF-interacting protein (MAFIP) of Homo sapiens (Human).